Reading from the N-terminus, the 296-residue chain is Thioredoxin-related transmembrane protein 2 (296 aa).

Residues 1–48 form the signal peptide; that stretch reads MAVLAPLIALVYSVPRLSRWLAQPYYLLSALLSAAFLLVRKLPPLCHG. Over 49–102 the chain is Extracellular; that stretch reads LPTQREDGNPCDFDWREVEILMFLSAIVMMKNRRSITVEQHIGNIFMFSKVANA. A helical transmembrane segment spans residues 103-125; the sequence is ILFFRLDIRMGLLYITLCIVFLM. Residues 114–270 form the Thioredoxin domain; sequence LLYITLCIVF…YQRAKKPSKA (157 aa). Topologically, residues 126–296 are cytoplasmic; the sequence is TCEPPLYMGP…VSDGENKKDK (171 aa). Phosphoserine is present on residues Ser-211, Ser-243, and Ser-288. The tract at residues 266-296 is disordered; it reads KPSKAGDSIPEEQPVASAPTTVSDGENKKDK. The Di-lysine motif signature appears at 293–296; sequence KKDK.

Monomer. Homodimer; disulfide-linked. Occurs in both reduced and oxidized monomeric form. Oxidative conditions increase homodimerization. Interacts with CANX. Interacts with ATP2A2.

The protein localises to the endoplasmic reticulum membrane. It is found in the mitochondrion membrane. Functionally, endoplasmic reticulum and mitochondria-associated protein that probably functions as a regulator of cellular redox state and thereby regulates protein post-translational modification, protein folding and mitochondrial activity. Indirectly regulates neuronal proliferation, migration, and organization in the developing brain. The sequence is that of Thioredoxin-related transmembrane protein 2 (TMX2) from Pongo abelii (Sumatran orangutan).